The sequence spans 155 residues: MSRRGTAEEKTAKSDPFYRNRLVNMLINRILKHGKKSLAYQLLYRTLKEVQKKTERNPLSILREAIRRVTPDIAVKARRKGGSTRQVPIEIGSTQGKALAIRWLLAASRKRPGGNMAFKFSSELVDASKGKGGAIRKKEETHKMAEANRTFAHFR.

It belongs to the universal ribosomal protein uS7 family. As to quaternary structure, part of the 30S ribosomal subunit.

Its subcellular location is the plastid. The protein resides in the chloroplast. One of the primary rRNA binding proteins, it binds directly to 16S rRNA where it nucleates assembly of the head domain of the 30S subunit. The protein is Small ribosomal subunit protein uS7cz/uS7cy (rps7-A) of Jasminum nudiflorum (Winter jasmine).